The primary structure comprises 619 residues: Adagio protein 3 (619 aa).

In terms of domain architecture, PAS spans 44–123 (VGMFYYPMTP…SEIRRCLEEG (80 aa)). S-4a-FMN cysteine is present on Cys91. Residues 127–168 (QGELLNFRKDGTPLVNRLRLAPIRDDDGTITHVIGIQVFSET) form the PAC domain. An F-box domain is found at 211–257 (ILQLSDEVLAHNILSRLTPRDVASIGSACRRLRQLTKNESVRKMVCQ). Kelch repeat units lie at residues 304-354 (SRCN…TSSP), 357-404 (RWGH…AGGT), 409-457 (RSWH…PTSW), 462-513 (RLGH…ECSA), and 523-571 (RLDH…NVPG).

Belongs to the ADAGIO family. As to quaternary structure, interacts with ADO1 (via Kelch repeats), ADO2 (via Kelch repeats), SKP1A/ASK1, SKP1B/ASK2, ASK3, SKP1K/ASK11, ASK12, ASK13 and SKP1N/ASK14. Interacts (via Kelch repeats) with CDF1, CDF2 and CDF3. Interacts (via N-terminus) with CO and GI (via N-terminus) in a blue-light-dependent manner. In terms of processing, FMN binds covalently to cysteine after exposure to blue light and is reversed in the dark. As to expression, highly expressed in stomata and leaves and to a lower extent in seeds, roots, rosettes, stems and siliques. Also present in sepals and anther filaments.

The protein resides in the nucleus. The protein localises to the cytoplasm. It functions in the pathway protein modification; protein ubiquitination. In terms of biological role, component of an E3 ubiquitin ligase complex that plays a central role in blue light-dependent circadian cycles. Acts as a blue light photoreceptor, due to the presence of FMN, that mediates light-regulated protein degradation of critical clock components by targeting them to the proteasome complex. The SCF(ADO3) E3 ubiquitin ligase complex is involved in the regulation of circadian clock-dependent processes including transition to flowering time, hypocotyl elongation, cotyledons and leaf movement rhythms. Forms a complex with 'GIGANTEA' (GI) to regulate 'CONSTANS' (CO) expression. Promotes CO expression during the light period of long days by decreasing the stability of CDF1 and CDF2 and by interacting directly with the CO protein and stabilizing it. ADO3 function is mainly GI dependent. Does not act as a regulator of CDF1 transcription. The interactions of ADO1/ZTL and ADO2 with ADO3 prevent its interaction with CDF1. The sequence is that of Adagio protein 3 (ADO3) from Arabidopsis thaliana (Mouse-ear cress).